A 388-amino-acid polypeptide reads, in one-letter code: Carbamoyl phosphate synthase small chain (388 aa).

Residues methionine 1–glycine 192 are CPSase. The L-glutamine site is built by serine 51, glycine 244, and glycine 246. The 187-residue stretch at threonine 196–alanine 382 folds into the Glutamine amidotransferase type-1 domain. The Nucleophile role is filled by cysteine 272. L-glutamine-binding residues include methionine 273, glutamine 276, asparagine 312, and phenylalanine 315. Catalysis depends on residues histidine 355 and glutamate 357.

The protein belongs to the CarA family. Composed of two chains; the small (or glutamine) chain promotes the hydrolysis of glutamine to ammonia, which is used by the large (or ammonia) chain to synthesize carbamoyl phosphate. Tetramer of heterodimers (alpha,beta)4.

It carries out the reaction hydrogencarbonate + L-glutamine + 2 ATP + H2O = carbamoyl phosphate + L-glutamate + 2 ADP + phosphate + 2 H(+). The enzyme catalyses L-glutamine + H2O = L-glutamate + NH4(+). It participates in amino-acid biosynthesis; L-arginine biosynthesis; carbamoyl phosphate from bicarbonate: step 1/1. Its pathway is pyrimidine metabolism; UMP biosynthesis via de novo pathway; (S)-dihydroorotate from bicarbonate: step 1/3. Its function is as follows. Small subunit of the glutamine-dependent carbamoyl phosphate synthetase (CPSase). CPSase catalyzes the formation of carbamoyl phosphate from the ammonia moiety of glutamine, carbonate, and phosphate donated by ATP, constituting the first step of 2 biosynthetic pathways, one leading to arginine and/or urea and the other to pyrimidine nucleotides. The small subunit (glutamine amidotransferase) binds and cleaves glutamine to supply the large subunit with the substrate ammonia. In Nostoc sp. (strain PCC 7120 / SAG 25.82 / UTEX 2576), this protein is Carbamoyl phosphate synthase small chain.